We begin with the raw amino-acid sequence, 229 residues long: MELLLLSNSTLPGKAWLEHALPLIANQLNGRRSAVFIPFAGVTQTWDEYTDKTAEVLAPLGVNVTGIHRVADPLAAIEKAEIIIVGGGNTFQLLKESRERGLLAPMADRVKRGALYIGWSAGANLACPTIRTTNDMPIVDPNGFDALDLFPLQINPHFTNALPEGHKGETREQRIRELLVVAPELTVIGLPEGNWIQVSNGQAVLGGPNTTWVFKAGEEAVALEAGHRF.

Active-site charge relay system residues include Ser-120, Asp-135, and His-157.

Belongs to the peptidase S51 family.

It localises to the cytoplasm. The catalysed reaction is Dipeptidase E catalyzes the hydrolysis of dipeptides Asp-|-Xaa. It does not act on peptides with N-terminal Glu, Asn or Gln, nor does it cleave isoaspartyl peptides.. Hydrolyzes dipeptides containing N-terminal aspartate residues. May play a role in allowing the cell to use peptide aspartate to spare carbon otherwise required for the synthesis of the aspartate family of amino acids. In Salmonella typhimurium (strain LT2 / SGSC1412 / ATCC 700720), this protein is Peptidase E (pepE).